Consider the following 86-residue polypeptide: Protein P17 (86 aa).

The disordered stretch occupies residues 63–86 (SPAEKPDNQPELTGITFEGDNNDQ).

In terms of assembly, homotetramer.

Functionally, assembly protein that acts late in phage assembly, after capsid protein folding and multimerization, and sorting of membrane proteins has occurred. The major coat protein P3 and two assembly factors (P10 and P17) are needed during the assembly of the virus particle inside the host cell, when the capsid protein multimers are capable of enclosing the host-derived membrane, containing the virus-encoded membrane-associated proteins. The chain is Protein P17 (XVII) from Enterobacteria phage PRD1 (Bacteriophage PRD1).